The primary structure comprises 287 residues: Putative glutamate--cysteine ligase regulatory subunit (287 aa).

This sequence belongs to the aldo/keto reductase family. Glutamate--cysteine ligase light chain subfamily. In terms of assembly, heterodimer of a catalytic heavy chain and a regulatory light chain.

The protein localises to the cytoplasm. The protein operates within sulfur metabolism; glutathione biosynthesis; glutathione from L-cysteine and L-glutamate: step 1/2. This chain is Putative glutamate--cysteine ligase regulatory subunit, found in Schizosaccharomyces pombe (strain 972 / ATCC 24843) (Fission yeast).